Consider the following 72-residue polypeptide: SRY-related protein ADW5 (72 aa).

Residues 1–69 (VKRPMNAFMV…KHMADYPDYK (69 aa)) constitute a DNA-binding region (HMG box).

Its subcellular location is the nucleus. The chain is SRY-related protein ADW5 from Alligator mississippiensis (American alligator).